A 528-amino-acid polypeptide reads, in one-letter code: MYSFFLVCPVAFLGFTICYLVYVELFPHPFPKSLPLVGFRKEIFSRPRASFRQILGSSQTLAEGYEQYGAAGRPYVVPDTTFQPQVMLPQNHIKWLSTQPESVLSSEAVRVERNGINYLPVKSDLKSSVLFIDKIIGKSLSQNLDLIQPDMYDEIRHTVDSTMGTDVASWREVNLSEAMSTIIDRTGNRILFGLSLCRNEVYLRILRCFIIFMGASTLLIGQLPPWFLRPIAGVLITIPTFIFKKLSVAYVRPLVKERMQSVSGEEDDQGPGKTSHDFVTQSINSVRKFKITIEGDVASYLAEQFLFLAFAAMATTGAAATNIFLDILSASPQINLYELLHLEAASIFKSEADWMSPSSMKEMINTDSAIRESLRKNTLQSRGLLKQVMPKDGIMLPDGAHVPHGMWLGVPAQAMQNDDEFYPNADGYDPLRFARLKADAEAECKDGPSSGKHLDAAHPSDKYLSFSYGRSSCPGRWFAVRLLKLIIAYIAVHYDIKPLAHRPKNFSFGDASIPSFTTKIMVRRRKQG.

Residues S3 to V23 traverse the membrane as a helical segment. C473 is a binding site for heme.

It belongs to the cytochrome P450 family. Requires heme as cofactor.

It is found in the membrane. The enzyme catalyses 4beta-carboxyl motiol + reduced [NADPH--hemoprotein reductase] + O2 = 2alpha-hydroxyl, 4beta-carboxyl motiol + oxidized [NADPH--hemoprotein reductase] + H2O + H(+). The catalysed reaction is 2-deoxypolytolypin + reduced [NADPH--hemoprotein reductase] + O2 = polytolypin + oxidized [NADPH--hemoprotein reductase] + H2O + H(+). Its pathway is secondary metabolite biosynthesis; terpenoid biosynthesis. Cytochrome P450 monooxygenase; part of the gene cluster that mediates the biosynthesis of antifungal fernane-type triterpenoid polytolypin. PolB acts as a hydroxylase and installs the 2-alpha-hydroxyl group in polytolypin. Within the pathway, the triterpene cyclase polA first catalyzes the cyclization of 2,3-oxidosqualene to motiol, polC converts the 4-alpha-methyl group of motiol to a carboxyl group, polB is responsible for appending a hydroxyl group at the 2-alpha position and polE is a dual functional P450, which can catalyze the formation of both the 1-beta-hydroxyl group and 10-beta-carboxyl group. In Polytolypa hystricis (strain UAMH7299), this protein is Cytochrome P450 monooxygenase polB.